The chain runs to 581 residues: Frizzled-3 (581 aa).

An N-terminal signal peptide occupies residues 1 to 19 (MYAASILILHLTWAVATIA). At 20-237 (ANGAGHNGPV…TSSQKKTSET (218 aa)) the chain is on the extracellular side. Positions 35-156 (PNGLQCQPIA…PEKHELCMQI (122 aa)) constitute an FZ domain. Intrachain disulfides connect Cys40-Cys101, Cys48-Cys94, Cys85-Cys123, Cys112-Cys153, and Cys116-Cys141. The N-linked (GlcNAc...) asparagine glycan is linked to Asn54. N-linked (GlcNAc...) asparagine glycosylation is present at Asn206. Residues 238–258 (LILGLSAVCFVLTLFALVTFW) form a helical membrane-spanning segment. Residues 259–270 (AEPTRFGYPERP) are Cytoplasmic-facing. Residues 271 to 291 (VLFLCLCYNLFSVCYLERIVF) traverse the membrane as a helical segment. Residues 292–321 (HNQARMHDVELQGRLMRPGCLLTPPCLASY) are Extracellular-facing. The chain crosses the membrane as a helical span at residues 322 to 342 (ITTSYLSLCAASWWLIFALCF). Topologically, residues 343–359 (YLSSHKKWSSEALEKRS) are cytoplasmic. A helical membrane pass occupies residues 360–380 (GLFHVLAWVPPLAPPIAALLL). Residues 381-393 (EKVRPSELTGMCY) are Extracellular-facing. The helical transmembrane segment at 394–414 (APGFVELPALVLLLLGLYFTL) threads the bilayer. Residues 415-442 (RASRSLLSLQQQLQPTLAHHRFGQIRKR) lie on the Cytoplasmic side of the membrane. The helical transmembrane segment at 443–463 (FVLFSLLYFAPTTAGVVAALC) threads the bilayer. The Extracellular segment spans residues 464 to 488 (ERYADSVPSCSTPDDCLSPTPLSAW). Residues 489-509 (PALVRIFFQLVGGTLTGLWVW) form a helical membrane-spanning segment. Over 510-581 (SRKTCESYRN…PVYNPNQSRV (72 aa)) the chain is Cytoplasmic. The PDZ-binding signature appears at 579 to 581 (SRV).

Belongs to the G-protein coupled receptor Fz/Smo family. In terms of tissue distribution, wing, leg and eye imaginal disks. In embryos, expressed is seen in brain, proventriculus, Malpighian tubules, anal plate and visceral mesoderm of parasegment 8.

It localises to the membrane. In terms of biological role, receptor for Wnt proteins. Most of frizzled receptors are coupled to the beta-catenin canonical signaling pathway, which leads to the activation of disheveled proteins, inhibition of GSK-3 kinase, nuclear accumulation of beta-catenin and activation of Wnt target genes. A second signaling pathway involving PKC and calcium fluxes has been seen for some family members, but it is not yet clear if it represents a distinct pathway or if it can be integrated in the canonical pathway, as PKC seems to be required for Wnt-mediated inactivation of GSK-3 kinase. Both pathways seem to involve interactions with G-proteins. Required to coordinate the cytoskeletons of epidermal cells to produce a parallel array of cuticular hairs and bristles. The chain is Frizzled-3 (fz3) from Drosophila melanogaster (Fruit fly).